Consider the following 212-residue polypeptide: Ribonuclease HII (212 aa).

Residues 20-209 (TCIVGVDEVG…VHNILYQEAS (190 aa)) form the RNase H type-2 domain. Residues aspartate 26, glutamate 27, and aspartate 117 each contribute to the a divalent metal cation site.

Belongs to the RNase HII family. The cofactor is Mn(2+). Mg(2+) serves as cofactor.

The protein resides in the cytoplasm. It catalyses the reaction Endonucleolytic cleavage to 5'-phosphomonoester.. Its function is as follows. Endonuclease that specifically degrades the RNA of RNA-DNA hybrids. The polypeptide is Ribonuclease HII (Cereibacter sphaeroides (strain ATCC 17025 / ATH 2.4.3) (Rhodobacter sphaeroides)).